The following is a 101-amino-acid chain: Small ribosomal subunit protein bS18c (101 aa).

It belongs to the bacterial ribosomal protein bS18 family. Part of the 30S ribosomal subunit.

The protein resides in the plastid. It is found in the chloroplast. This Carica papaya (Papaya) protein is Small ribosomal subunit protein bS18c.